The primary structure comprises 608 residues: Probable adenylate kinase 5, chloroplastic (608 aa).

Positions 1 to 20 are enriched in low complexity; that stretch reads MAASSSSSSPAAASAPFAAP. Residues 1 to 44 form a disordered region; the sequence is MAASSSSSSPAAASAPFAAPGPHRRPGLALRPSPPTPPSSSLSC. The N-terminal 75 residues, 1–75, are a transit peptide targeting the chloroplast; that stretch reads MAASSSSSSP…GPRGMGLRCR (75 aa). 99–104 is a binding site for ATP; the sequence is ASGKGT. The NMP stretch occupies residues 119–148; it reads STGDLLRAEVSSGTEIGKKAKEYMDNGMLV. AMP-binding positions include Thr-120, Arg-125, 146–148, 175–178, and Gln-182; these read MLV and GYPR. ATP-binding positions include Arg-209, Arg-213, and 222 to 223; that span reads IY. An LID region spans residues 212–245; that stretch reads GRRLDPETGKIYHIKNFPPENDEVSARLVTRSDD. AMP is bound by residues Arg-242 and Arg-253.

This sequence belongs to the adenylate kinase family.

It is found in the plastid. It localises to the chloroplast. The enzyme catalyses AMP + ATP = 2 ADP. Catalyzes the reversible transfer of the terminal phosphate group between ATP and AMP. Plays an important role in cellular energy homeostasis and in adenine nucleotide metabolism. This chain is Probable adenylate kinase 5, chloroplastic, found in Oryza sativa subsp. japonica (Rice).